Reading from the N-terminus, the 436-residue chain is Putative UDP-arabinose 4-epimerase 4 (436 aa).

Residues 1–20 (MLNSSGVRTQRRSPRPLSLG) form a disordered region. Residues 1–60 (MLNSSGVRTQRRSPRPLSLGGRKIITPTKFAYDHHNPDKVLDFVEMDCLEPKTKNNLTGK) are Cytoplasmic-facing. A helical; Signal-anchor for type II membrane protein membrane pass occupies residues 61-81 (LLLVASLLILAIIVISQSSSF). Over 82 to 436 (TSPSAFSQRE…KIHPHGYNSY (355 aa)) the chain is Lumenal. Residue 96-127 (HVLVTGGAGYIGSHAALRLLRDSYRVTIVDNL) participates in NAD(+) binding. Tyr244 functions as the Proton acceptor in the catalytic mechanism.

This sequence belongs to the NAD(P)-dependent epimerase/dehydratase family. It depends on NAD(+) as a cofactor.

Its subcellular location is the golgi apparatus. It localises to the golgi stack membrane. It catalyses the reaction UDP-beta-L-arabinopyranose = UDP-alpha-D-xylose. Its pathway is nucleotide-sugar biosynthesis; UDP-L-arabinose biosynthesis; UDP-L-arabinose from UDP-alpha-D-xylose: step 1/1. It functions in the pathway cell wall biogenesis; cell wall polysaccharide biosynthesis. In Arabidopsis thaliana (Mouse-ear cress), this protein is Putative UDP-arabinose 4-epimerase 4.